We begin with the raw amino-acid sequence, 488 residues long: ATP synthase subunit beta (488 aa).

155-162 (GGAGVGKT) contributes to the ATP binding site. Positions 467 to 488 (GFAPDDQNTDADEKPAAQAAAN) are disordered.

Belongs to the ATPase alpha/beta chains family. F-type ATPases have 2 components, CF(1) - the catalytic core - and CF(0) - the membrane proton channel. CF(1) has five subunits: alpha(3), beta(3), gamma(1), delta(1), epsilon(1). CF(0) has three main subunits: a(1), b(2) and c(9-12). The alpha and beta chains form an alternating ring which encloses part of the gamma chain. CF(1) is attached to CF(0) by a central stalk formed by the gamma and epsilon chains, while a peripheral stalk is formed by the delta and b chains.

Its subcellular location is the cell membrane. The enzyme catalyses ATP + H2O + 4 H(+)(in) = ADP + phosphate + 5 H(+)(out). Its function is as follows. Produces ATP from ADP in the presence of a proton gradient across the membrane. The catalytic sites are hosted primarily by the beta subunits. The sequence is that of ATP synthase subunit beta from Lacticaseibacillus casei (strain BL23) (Lactobacillus casei).